Here is a 198-residue protein sequence, read N- to C-terminus: Mitrocomin (198 aa).

Positions methionine 1–alanine 8 are excised as a propeptide. EF-hand domains follow at residues lysine 19 to lysine 54, aspartate 118 to glutamine 147, and glutamine 148 to serine 183. Ca(2+) is bound by residues aspartate 32, asparagine 34, asparagine 36, glutamine 38, glutamate 43, aspartate 125, aspartate 127, asparagine 129, serine 131, glutamate 136, aspartate 161, aspartate 163, aspartate 165, lysine 167, and glutamate 172.

Belongs to the aequorin family.

Its function is as follows. Ca(2+)-dependent bioluminescence photoprotein. Displays an emission peak at 470 nm (blue light). Trace amounts of calcium ion trigger the intramolecular oxidation of the chromophore, coelenterazine into coelenteramide and CO(2) with the concomitant emission of light. This is Mitrocomin (MI17) from Mitrocoma cellularia (Cross jellyfish).